The chain runs to 306 residues: Nucleotide-binding protein RSal33209_2275 (306 aa).

29 to 36 serves as a coordination point for ATP; the sequence is GMSGAGRS. 80-83 contributes to the GTP binding site; sequence DVRG.

The protein belongs to the RapZ-like family.

Its function is as follows. Displays ATPase and GTPase activities. This chain is Nucleotide-binding protein RSal33209_2275, found in Renibacterium salmoninarum (strain ATCC 33209 / DSM 20767 / JCM 11484 / NBRC 15589 / NCIMB 2235).